A 265-amino-acid chain; its full sequence is Isoprenyl transferase (265 aa).

Residue Asp35 is part of the active site. Asp35 contributes to the Mg(2+) binding site. Residues 36-39, Trp40, Arg48, His52, and 80-82 contribute to the substrate site; these read GNGR and STE. Residue Asn83 is the Proton acceptor of the active site. Residues Trp84, Arg86, Arg203, and 209–211 contribute to the substrate site; that span reads RIS. Mg(2+) is bound at residue Glu222.

It belongs to the UPP synthase family. In terms of assembly, homodimer. It depends on Mg(2+) as a cofactor.

In terms of biological role, catalyzes the condensation of isopentenyl diphosphate (IPP) with allylic pyrophosphates generating different type of terpenoids. The chain is Isoprenyl transferase from Prochlorococcus marinus (strain MIT 9313).